The primary structure comprises 247 residues: Geranylgeranylglyceryl phosphate synthase (247 aa).

Residues aspartate 23 and serine 52 each coordinate Mg(2+). Sn-glycerol 1-phosphate contacts are provided by residues 171 to 177 (YLEAGSG), 203 to 204 (GG), and 225 to 226 (GT).

It belongs to the GGGP/HepGP synthase family. Group II subfamily. Mg(2+) is required as a cofactor.

Its subcellular location is the cytoplasm. It catalyses the reaction sn-glycerol 1-phosphate + (2E,6E,10E)-geranylgeranyl diphosphate = sn-3-O-(geranylgeranyl)glycerol 1-phosphate + diphosphate. Its pathway is membrane lipid metabolism; glycerophospholipid metabolism. Functionally, prenyltransferase that catalyzes the transfer of the geranylgeranyl moiety of geranylgeranyl diphosphate (GGPP) to the C3 hydroxyl of sn-glycerol-1-phosphate (G1P). This reaction is the first ether-bond-formation step in the biosynthesis of archaeal membrane lipids. The sequence is that of Geranylgeranylglyceryl phosphate synthase from Methanosarcina acetivorans (strain ATCC 35395 / DSM 2834 / JCM 12185 / C2A).